The chain runs to 2923 residues: Cadherin EGF LAG seven-pass G-type receptor 2 (2923 aa).

The signal sequence occupies residues 1–31; the sequence is MRSPATGVPLPTPPPPLLLLLLLLLPPPLLG. Residues 32 to 2380 are Extracellular-facing; the sequence is DQVGPCRSLG…GEILPLKTLT (2349 aa). Residues 154 to 198 form a disordered region; sequence PGLRAGERSPEESLGGRRKRNVNTAPQFQPPSYQATVPENQPAGT. Residues 158 to 168 are compositionally biased toward basic and acidic residues; the sequence is AGERSPEESLG. Residues 175–196 are compositionally biased toward polar residues; sequence VNTAPQFQPPSYQATVPENQPA. Cadherin domains follow at residues 182 to 289, 290 to 399, 400 to 505, 506 to 610, 611 to 712, 713 to 815, 816 to 921, 922 to 1023, and 1028 to 1146; these read QPPS…DPVF, EQQE…APQF, SEKR…APIF, VSTP…NPTF, TQPE…RPVF, QSSH…APQF, LRDS…PPVF, EQDE…PPVL, and ILFN…SPLL. Asn-486, Asn-557, and Asn-701 each carry an N-linked (GlcNAc...) asparagine glycan. Residues Asn-1036, Asn-1076, Asn-1182, and Asn-1212 are each glycosylated (N-linked (GlcNAc...) asparagine). An EGF-like 1; calcium-binding domain is found at 1228-1286; that stretch reads DDNICLREPCENYMRCVSVLRFDSSAPFIASSSVLFRPIHPVGGLRCRCPPGFTGDYCE. 9 disulfides stabilise this stretch: Cys-1232–Cys-1243, Cys-1237–Cys-1274, Cys-1276–Cys-1285, Cys-1292–Cys-1303, Cys-1297–Cys-1312, Cys-1314–Cys-1323, Cys-1332–Cys-1343, Cys-1337–Cys-1353, and Cys-1355–Cys-1365. An EGF-like 2; calcium-binding domain is found at 1288-1324; the sequence is EVDLCYSRPCGPHGRCRSREGGYTCLCRDGYTGEHCE. One can recognise an EGF-like 3; calcium-binding domain in the interval 1328-1366; the sequence is RSGRCTPGVCKNGGTCVNLLVGGFKCDCPSGDFEKPYCQ. The 205-residue stretch at 1367 to 1571 folds into the Laminin G-like 1 domain; sequence VTTRSFPAHS…IANNGTVPGC (205 aa). N-linked (GlcNAc...) asparagine glycosylation is found at Asn-1501 and Asn-1565. 4 disulfide bridges follow: Cys-1545-Cys-1571, Cys-1578-Cys-1589, Cys-1583-Cys-1598, and Cys-1600-Cys-1609. An EGF-like 4; calcium-binding domain is found at 1574–1610; sequence KKNVCDSNTCHNGGTCVNQWDAFSCECPLGFGGKSCA. Position 1591 is a (3R)-3-hydroxyasparagine (Asn-1591). The 178-residue stretch at 1614 to 1791 folds into the Laminin G-like 2 domain; that stretch reads ANPQHFLGSS…GESINVEQGC (178 aa). Asn-1741 carries N-linked (GlcNAc...) asparagine glycosylation. Disulfide bonds link Cys-1761–Cys-1791, Cys-1797–Cys-1808, Cys-1802–Cys-1817, Cys-1819–Cys-1828, Cys-1832–Cys-1843, Cys-1837–Cys-1855, Cys-1857–Cys-1866, Cys-1887–Cys-1899, Cys-1889–Cys-1906, Cys-1908–Cys-1921, Cys-1924–Cys-1936, Cys-1926–Cys-1943, Cys-1945–Cys-1954, and Cys-1957–Cys-1969. In terms of domain architecture, EGF-like 5; calcium-binding spans 1793-1828; the sequence is LPDPCDSNPCPANSYCSNDWDSYSCSCDPGYYGDNC. At Asn-1810 the chain carries (3R)-3-hydroxyasparagine. N-linked (GlcNAc...) asparagine glycosylation is present at Asn-1827. Residues 1829-1867 enclose the EGF-like 6; calcium-binding domain; the sequence is TNVCDLNPCEHQSVCTRKPSAPHGYTCECPPNYLGPYCE. An EGF-like 7; calcium-binding domain is found at 1883–1922; it reads TCGPCNCDVSKGFDPDCNKTSGECHCKENHYRPPGSPTCL. Asn-1900 carries an N-linked (GlcNAc...) asparagine glycan. Residues 1924 to 1971 enclose the Laminin EGF-like domain; it reads CDCYPTGSLSRVCDPEDGQCPCKPGVIGRQCDRCDNPFAEVTTNGCEV. 3 N-linked (GlcNAc...) asparagine glycosylation sites follow: Asn-2024, Asn-2043, and Asn-2061. A GAIN-B domain is found at 2199 to 2369; that stretch reads ETTVILPESV…AVLMDVSRRE (171 aa). Positions 2213–2238 are disordered; sequence PPVVRPAGPGEAQEPEELARRQRRHP. Cystine bridges form between Cys-2319–Cys-2351 and Cys-2339–Cys-2353. The interval 2319 to 2369 is GPS; sequence CVFWNHSILVSGTGGWSARGCEVVFRNESHVSCQCNHMTSFAVLMDVSRRE. Residues Asn-2323 and Asn-2345 are each glycosylated (N-linked (GlcNAc...) asparagine). A helical transmembrane segment spans residues 2381–2401; that stretch reads YVALGVTLAALLLTFFFLTLL. The Cytoplasmic segment spans residues 2402 to 2416; that stretch reads RILRSNQHGIRRNLT. The helical transmembrane segment at 2417-2437 threads the bilayer; sequence AALGLAQLVFLLGINQADLPF. Position 2438 (Ala-2438) is a topological domain, extracellular. A helical transmembrane segment spans residues 2439-2459; sequence CTVIAILLHFLYLCTFSWALL. Residues 2460 to 2480 are Cytoplasmic-facing; the sequence is EALHLYRALTEVRDVNTGPMR. The chain crosses the membrane as a helical span at residues 2481-2501; it reads FYYMLGWGVPAFITGLAVGLD. At 2502 to 2519 the chain is on the extracellular side; the sequence is PEGYGNPDFCWLSIYDTL. The helical transmembrane segment at 2520–2540 threads the bilayer; that stretch reads IWSFAGPVAFAVSMSVFLYIL. Residues 2541–2560 are Cytoplasmic-facing; the sequence is AARASCAAQRQGFEKKGPVS. The helical transmembrane segment at 2561–2581 threads the bilayer; the sequence is GLQPSFAVLLLLSATWLLALL. Residues 2582 to 2591 lie on the Extracellular side of the membrane; that stretch reads SVNSDTLLFH. The helical transmembrane segment at 2592-2612 threads the bilayer; it reads YLFATCNCIQGPFIFLSYVVL. Over 2613–2923 the chain is Cytoplasmic; the sequence is SKEVRKALKL…SEFLFFNFLH (311 aa). 2 disordered regions span residues 2688–2838 and 2854–2888; these read SALN…HKGI and LRLPLEQCTGSSRGSSASEGSRGGPPPRPPPRQSL. Acidic residues-rich tracts occupy residues 2718–2730 and 2742–2753; these read TDSDSDLSLEDDQ and SEEEEEEEEEEA. The span at 2807–2819 shows a compositional bias: basic and acidic residues; the sequence is PEERLRENGDALS. Residues 2863–2873 show a composition bias toward low complexity; the sequence is GSSRGSSASEG.

The protein belongs to the G-protein coupled receptor 2 family. LN-TM7 subfamily. In terms of assembly, heterodimer of 2 chains generated by proteolytic processing; the large extracellular N-terminal fragment and the membrane-bound C-terminal fragment predominantly remain associated and non-covalently linked. The iron and 2-oxoglutarate dependent 3-hydroxylation of aspartate and asparagine is (R) stereospecific within EGF domains. In terms of processing, autoproteolytically processed at the GPS region of the GAIN-B domain; this cleavage modulates receptor activity. In terms of tissue distribution, highest expression in brain and testis.

The protein resides in the cell membrane. In terms of biological role, receptor that may have an important role in cell/cell signaling during nervous system formation. The sequence is that of Cadherin EGF LAG seven-pass G-type receptor 2 from Homo sapiens (Human).